The sequence spans 595 residues: DNA mismatch repair protein MutL (595 aa).

The protein belongs to the DNA mismatch repair MutL/HexB family.

In terms of biological role, this protein is involved in the repair of mismatches in DNA. It is required for dam-dependent methyl-directed DNA mismatch repair. May act as a 'molecular matchmaker', a protein that promotes the formation of a stable complex between two or more DNA-binding proteins in an ATP-dependent manner without itself being part of a final effector complex. The chain is DNA mismatch repair protein MutL from Endomicrobium trichonymphae.